A 227-amino-acid polypeptide reads, in one-letter code: Chaperone protein FocC (227 aa).

Positions 1 to 21 are cleaved as a signal peptide; it reads MRIWAVLASFLVFFYIPQSYA.

Belongs to the periplasmic pilus chaperone family.

It is found in the periplasm. In terms of biological role, involved in the biogenesis of the F1C fimbriae. This is Chaperone protein FocC (focC) from Escherichia coli O6:H1 (strain CFT073 / ATCC 700928 / UPEC).